We begin with the raw amino-acid sequence, 313 residues long: Ribosomal RNA small subunit methyltransferase H (313 aa).

Residues 35 to 37, Asp55, Phe79, Asp101, and Gln108 contribute to the S-adenosyl-L-methionine site; that span reads GGH.

The protein belongs to the methyltransferase superfamily. RsmH family.

It localises to the cytoplasm. It carries out the reaction cytidine(1402) in 16S rRNA + S-adenosyl-L-methionine = N(4)-methylcytidine(1402) in 16S rRNA + S-adenosyl-L-homocysteine + H(+). In terms of biological role, specifically methylates the N4 position of cytidine in position 1402 (C1402) of 16S rRNA. The sequence is that of Ribosomal RNA small subunit methyltransferase H from Enterobacter sp. (strain 638).